The primary structure comprises 459 residues: Cysteine--tRNA ligase (459 aa).

Cysteine 27 is a Zn(2+) binding site. Positions 29 to 39 (PTVYDDAHLGH) match the 'HIGH' region motif. Zn(2+) is bound by residues cysteine 202, histidine 231, and glutamate 235. Positions 263 to 267 (KMSKS) match the 'KMSKS' region motif. Lysine 266 serves as a coordination point for ATP.

This sequence belongs to the class-I aminoacyl-tRNA synthetase family. In terms of assembly, monomer. It depends on Zn(2+) as a cofactor.

The protein resides in the cytoplasm. The enzyme catalyses tRNA(Cys) + L-cysteine + ATP = L-cysteinyl-tRNA(Cys) + AMP + diphosphate. The chain is Cysteine--tRNA ligase from Campylobacter fetus subsp. fetus (strain 82-40).